The chain runs to 263 residues: Type III pantothenate kinase (263 aa).

14–21 provides a ligand contact to ATP; that stretch reads DIGNTSVN. 115 to 118 contributes to the substrate binding site; it reads GADR. Asp-117 acts as the Proton acceptor in catalysis. Asp-137 lines the K(+) pocket. ATP is bound at residue Thr-140. Residue Thr-192 participates in substrate binding.

The protein belongs to the type III pantothenate kinase family. As to quaternary structure, homodimer. Requires NH4(+) as cofactor. It depends on K(+) as a cofactor.

It is found in the cytoplasm. The enzyme catalyses (R)-pantothenate + ATP = (R)-4'-phosphopantothenate + ADP + H(+). The protein operates within cofactor biosynthesis; coenzyme A biosynthesis; CoA from (R)-pantothenate: step 1/5. In terms of biological role, catalyzes the phosphorylation of pantothenate (Pan), the first step in CoA biosynthesis. The sequence is that of Type III pantothenate kinase from Dehalococcoides mccartyi (strain CBDB1).